We begin with the raw amino-acid sequence, 736 residues long: DNA ligase (736 aa).

Residues 41–45 (DQEYD), 91–92 (SL), and Glu-125 each bind NAD(+). The active-site N6-AMP-lysine intermediate is the Lys-127. NAD(+) is bound at residue Arg-148. Residues 170-205 (ELTPLPLAGGAGGGPLDDSGSAPTPDPSRRREGKWN) are disordered. Glu-215, Lys-347, and Lys-371 together coordinate NAD(+). 4 residues coordinate Zn(2+): Cys-463, Cys-466, Cys-481, and Cys-487. One can recognise a BRCT domain in the interval 656–736 (TLDSPVAGKT…GWAEIVAAAG (81 aa)).

Belongs to the NAD-dependent DNA ligase family. LigA subfamily. The cofactor is Mg(2+). It depends on Mn(2+) as a cofactor.

The enzyme catalyses NAD(+) + (deoxyribonucleotide)n-3'-hydroxyl + 5'-phospho-(deoxyribonucleotide)m = (deoxyribonucleotide)n+m + AMP + beta-nicotinamide D-nucleotide.. In terms of biological role, DNA ligase that catalyzes the formation of phosphodiester linkages between 5'-phosphoryl and 3'-hydroxyl groups in double-stranded DNA using NAD as a coenzyme and as the energy source for the reaction. It is essential for DNA replication and repair of damaged DNA. The protein is DNA ligase of Erythrobacter litoralis (strain HTCC2594).